Consider the following 182-residue polypeptide: CASP-like protein 5A1 (182 aa).

Residues 1–47 (MEMASHPAVHPVALPPPYQAVGPPAPPAVRINDFPGSPGTLMGLALR) lie on the Cytoplasmic side of the membrane. A helical membrane pass occupies residues 48–68 (FAQLGFALTALCIMVSIVGFS). The Extracellular segment spans residues 69 to 72 (SVTA). Residues 73–93 (FCFLVAAMVLQCIWSLCLGVL) form a helical membrane-spanning segment. Residues 94–117 (DCYALLTKRSLRNSLILSFFVVGD) lie on the Cytoplasmic side of the membrane. A helical transmembrane segment spans residues 118-138 (WITSTMTFAGACAAAGITVLI). Residues 139-158 (DNDLNQCGPNHCNRFEAAAA) lie on the Extracellular side of the membrane. A helical membrane pass occupies residues 159–179 (MAFMSWVITTISFFLSFWILV). Topologically, residues 180–182 (TCR) are cytoplasmic.

The protein belongs to the Casparian strip membrane proteins (CASP) family. In terms of assembly, homodimer and heterodimers.

The protein resides in the cell membrane. This Physcomitrium patens (Spreading-leaved earth moss) protein is CASP-like protein 5A1.